The following is a 540-amino-acid chain: Chaperonin GroEL (540 aa).

Residues 29-32 (TLGP), 86-90 (DGTTT), Gly-413, and Asp-493 contribute to the ATP site. The disordered stretch occupies residues 520–540 (AEKPEPKPAPGPADPGAGMDF).

This sequence belongs to the chaperonin (HSP60) family. In terms of assembly, forms a cylinder of 14 subunits composed of two heptameric rings stacked back-to-back. Interacts with the co-chaperonin GroES.

Its subcellular location is the cytoplasm. The catalysed reaction is ATP + H2O + a folded polypeptide = ADP + phosphate + an unfolded polypeptide.. Its function is as follows. Together with its co-chaperonin GroES, plays an essential role in assisting protein folding. The GroEL-GroES system forms a nano-cage that allows encapsulation of the non-native substrate proteins and provides a physical environment optimized to promote and accelerate protein folding. This is Chaperonin GroEL from Tropheryma whipplei (strain TW08/27) (Whipple's bacillus).